Consider the following 825-residue polypeptide: Putative pentatricopeptide repeat-containing protein At2g01510 (825 aa).

17 PPR repeats span residues 47–77 (DTCRSNFIVEDLLRRGQVSAARKVYDEMPHK), 78–108 (NTVSTNTMISGHVKTGDVSSARDLFDAMPDR), 109–143 (TVVTWTILMGWYARNSHFDEAFKLFRQMCRSSSCT), 146–180 (DHVTFTTLLPGCNDAVPQNAVGQVHAFAVKLGFDT), 183–213 (FLTVSNVLLKSYCEVRRLDLACVLFEEIPEK), 214–248 (DSVTFNTLITGYEKDGLYTESIHLFLKMRQSGHQP), 249–283 (SDFTFSGVLKAVVGLHDFALGQQLHALSVTTGFSR), 284–314 (DASVGNQILDFYSKHDRVLETRMLFDEMPEL), 315–349 (DFVSYNVVISSYSQADQYEASLHFFREMQCMGFDR), 350–384 (RNFPFATMLSIAANLSSLQMGRQLHCQALLATADS), 385–415 (ILHVGNSLVDMYAKCEMFEEAELIFKSLPQR), 416–450 (TTVSWTALISGYVQKGLHGAGLKLFTKMRGSNLRA), 451–485 (DQSTFATVLKASASFASLLLGKQLHAFIIRSGNLE), 486–516 (NVFSGSGLVDMYAKCGSIKDAVQVFEEMPDR), 517–551 (NAVSWNALISAHADNGDGEAAIGAFAKMIESGLQP), 552–587 (DSVSILGVLTACSHCGFVEQGTEYFQAMSPIYGITP), and 588–618 (KKKHYACMLDLLGRNGRFAEAEKLMDEMPFE). Residues 623–699 (MWSSVLNACR…VPAYSWVEVN (77 aa)) form a type E motif region. A type E(+) motif region spans residues 700–730 (HKIHVFSSNDQTHPNGDEIVRKINELTAEIE). A type DYW motif region spans residues 731–825 (REGYKPDTSS…EGVCSCGDYW (95 aa)).

This sequence belongs to the PPR family. PCMP-H subfamily.

The chain is Putative pentatricopeptide repeat-containing protein At2g01510 (PCMP-H36) from Arabidopsis thaliana (Mouse-ear cress).